Reading from the N-terminus, the 713-residue chain is Endopolyphosphatase (713 aa).

Over 1 to 19 (MSVLIDEKSHRSSGSTRSR) the chain is Cytoplasmic. Residues 20–40 (IVVTVVGVLLMVSGLAVMLGH) traverse the membrane as a helical; Signal-anchor for type II membrane protein segment. Residues 41–713 (QSGSANEALG…SSEYENMGMG (673 aa)) are Vacuolar-facing. Residues 399–418 (SDDDDNSDSDSDDDDEDTSL) are compositionally biased toward acidic residues. Positions 399 to 430 (SDDDDNSDSDSDDDDEDTSLEESYSNFNSPIL) are disordered. N-linked (GlcNAc...) asparagine glycosylation is found at asparagine 507 and asparagine 645. Residues 640–659 (VKEKKNKSNKKSKKKKKNKD) show a composition bias toward basic residues. A disordered region spans residues 640–684 (VKEKKNKSNKKSKKKKKNKDKRLLENSEPLKQDGSKDSRLEQDRV). Over residues 660-683 (KRLLENSEPLKQDGSKDSRLEQDR) the composition is skewed to basic and acidic residues.

It belongs to the endopolyphosphatase PPN1 family. Requires a divalent metal cation as cofactor. Processing by proteases in the vacuole may be required for activation.

The protein resides in the vacuole membrane. The enzyme catalyses [phosphate](n+1) + n H2O = (n+1) phosphate + n H(+). Catalyzes the hydrolysis of inorganic polyphosphate (polyP) chains of many hundreds of phosphate residues into shorter lengths. In Debaryomyces hansenii (strain ATCC 36239 / CBS 767 / BCRC 21394 / JCM 1990 / NBRC 0083 / IGC 2968) (Yeast), this protein is Endopolyphosphatase (PPN1).